The primary structure comprises 323 residues: MSSKQHCVKLNDGHLIPALGFGTYKPKEVPKSKSLEAACLALDVGYRHVDTAYAYQVEEEIGQAIQSKIKAGVVKREDLFITTKLWCTCFRPELVKPALEKSLKKLQLDYVDLYIMHYPVPMKSGDNDFPVNEQGKSLLDTVDFCDTWERLEECKDAGLVKSIGVSNFNHRQLERILNKPGLKYKPVCNQVECHLYLNQRKLLDYCESKDIVLVAYGALGTQRYKEWVDQNSPVLLNDPVLCDVAKKNKRSPALIALRYLIQRGIVPLAQSFKENEMRENLQVFGFQLSPEDMKTLDGLNKNFRYLPAEFLVDHPEYPFVEEY.

NAD(+)-binding positions include 20-24 (GFGTY), D50, and Y55. The Proton donor role is filled by Y55. H117 is a binding site for substrate. NAD(+) is bound by residues 166-167 (SN), Q190, 216-224 (YGALGTQRY), and 270-280 (QSFKENEMREN).

Belongs to the aldo/keto reductase family.

In terms of biological role, catalyzes the dehydrogenation of 17-beta-hydroxysteroids. May also exhibit significant activity with a variety of cyclic and alicyclic alcohols. Uses both NAD and NADP, but the activity is much greater with NAD than with NADP. The sequence is that of Aldo-keto reductase family 1 member C13 (Akr1c13) from Mus musculus (Mouse).